Reading from the N-terminus, the 378-residue chain is Glutamate 5-kinase (378 aa).

Residue Lys-19 participates in ATP binding. Substrate-binding residues include Ser-59, Asp-146, and Asn-158. 178-179 (TD) is a binding site for ATP. Residues 285–363 (RGSVAVDAGA…SEFERLLGYT (79 aa)) form the PUA domain.

The protein belongs to the glutamate 5-kinase family.

It is found in the cytoplasm. It catalyses the reaction L-glutamate + ATP = L-glutamyl 5-phosphate + ADP. Its pathway is amino-acid biosynthesis; L-proline biosynthesis; L-glutamate 5-semialdehyde from L-glutamate: step 1/2. Catalyzes the transfer of a phosphate group to glutamate to form L-glutamate 5-phosphate. In Polaromonas sp. (strain JS666 / ATCC BAA-500), this protein is Glutamate 5-kinase.